Reading from the N-terminus, the 163-residue chain is NF-kappa-B inhibitor-interacting Ras-like protein 2 (163 aa).

Residues Met-1–His-163 are small GTPase-like. GTP is bound at residue Gly-11–Thr-18. The short motif at Met-35–Tyr-43 is the Effector region element. GTP is bound by residues Asp-61 to Leu-65 and Asn-120 to Asp-123.

It belongs to the small GTPase superfamily. Ras family. KappaB-Ras subfamily.

The protein localises to the cytoplasm. Atypical Ras-like protein that acts as a potent regulator of NF-kappa-B activity by preventing the degradation of NF-kappa-B inhibitor beta (NFKBIB) by most signals, explaining why NFKBIB is more resistant to degradation. The chain is NF-kappa-B inhibitor-interacting Ras-like protein 2 (nkiras2) from Xenopus laevis (African clawed frog).